Consider the following 149-residue polypeptide: Large ribosomal subunit protein uL13 (149 aa).

The protein belongs to the universal ribosomal protein uL13 family. Part of the 50S ribosomal subunit.

Its function is as follows. This protein is one of the early assembly proteins of the 50S ribosomal subunit, although it is not seen to bind rRNA by itself. It is important during the early stages of 50S assembly. In Chlorobium limicola (strain DSM 245 / NBRC 103803 / 6330), this protein is Large ribosomal subunit protein uL13.